The primary structure comprises 282 residues: Epoxide hydrolase LasB (282 aa).

Residues 1–133 (MPAETVRKEV…TDSSWTARPA (133 aa)) form a lsd19A region. Y14 serves as a coordination point for substrate. D38 serves as the catalytic Proton acceptor; for 5-exo epoxide-opening cyclization activity. Substrate contacts are provided by E65 and H146. The tract at residues 134 to 282 (PDEERRKELA…TDVSLLDPAA (149 aa)) is lsd19B. The Proton acceptor; for 6-endo epoxide-opening cyclization activity role is filled by D170. R177, E197, and Y251 together coordinate substrate.

Epoxide hydrolase responsible for the double epoxide-opening cyclization of bisepoxyprelasalocid A to form lasalocid A, a polyether antibiotic. In vitro, accepts various substrate analogs differing in the left segment of lasalocid and epoxide stereochemistry to afford products with excellent regioselectivity. In Streptomyces lasalocidi (Streptomyces lasaliensis), this protein is Epoxide hydrolase LasB (lsd19).